The chain runs to 231 residues: Adenosine 5'-phosphosulfate reductase (231 aa).

Residues C118, C119, C201, and C204 each coordinate [4Fe-4S] cluster. The Nucleophile; cysteine thiosulfonate intermediate role is filled by C227.

This sequence belongs to the PAPS reductase family. CysH subfamily. [4Fe-4S] cluster is required as a cofactor.

It is found in the cytoplasm. The enzyme catalyses [thioredoxin]-disulfide + sulfite + AMP + 2 H(+) = adenosine 5'-phosphosulfate + [thioredoxin]-dithiol. It participates in sulfur metabolism; hydrogen sulfide biosynthesis; sulfite from sulfate. In terms of biological role, catalyzes the formation of sulfite from adenosine 5'-phosphosulfate (APS) using thioredoxin as an electron donor. The sequence is that of Adenosine 5'-phosphosulfate reductase from Halalkalibacterium halodurans (strain ATCC BAA-125 / DSM 18197 / FERM 7344 / JCM 9153 / C-125) (Bacillus halodurans).